The following is a 437-amino-acid chain: GTPase Der (437 aa).

2 EngA-type G domains span residues 2–167 (ATVL…EKKG) and 180–356 (IRVA…NSLF). GTP-binding positions include 8–15 (GKSNVGKS), 55–59 (DTCGI), 118–121 (NKSE), 186–193 (GRPNAGKS), 233–237 (DTAGL), and 299–302 (NKID). One can recognise a KH-like domain in the interval 357-437 (YRVQTSAVNA…PIFLKFKNRH (81 aa)).

Belongs to the TRAFAC class TrmE-Era-EngA-EngB-Septin-like GTPase superfamily. EngA (Der) GTPase family. Associates with the 50S ribosomal subunit.

In terms of biological role, GTPase that plays an essential role in the late steps of ribosome biogenesis. This is GTPase Der from Thermosipho melanesiensis (strain DSM 12029 / CIP 104789 / BI429).